Reading from the N-terminus, the 254-residue chain is MTLAKRIIPCLDVTAGRVVKGVNFLELRDAGDPIEIARRYDEQGADEITFLDITATSDGRDLILDIIEAVASQVFIPLTVGGGVRAVDDVRRLLNAGADKVGINSSAISNPQLVFDASQKYGSQCIVVAIDAKKASDGRWEVFTHGGRKATGLDAVEWAKKMQNLGAGEILLTSMDRDGTKIGFDLDLTRSVSDAISIPVIASGGVGGLQDLADGVKVGRADAVLAASIFHYGQHTVQEAKRFMADQGIPMRLV.

Residues D12 and D131 contribute to the active site.

This sequence belongs to the HisA/HisF family. As to quaternary structure, heterodimer of HisH and HisF.

The protein localises to the cytoplasm. The catalysed reaction is 5-[(5-phospho-1-deoxy-D-ribulos-1-ylimino)methylamino]-1-(5-phospho-beta-D-ribosyl)imidazole-4-carboxamide + L-glutamine = D-erythro-1-(imidazol-4-yl)glycerol 3-phosphate + 5-amino-1-(5-phospho-beta-D-ribosyl)imidazole-4-carboxamide + L-glutamate + H(+). It participates in amino-acid biosynthesis; L-histidine biosynthesis; L-histidine from 5-phospho-alpha-D-ribose 1-diphosphate: step 5/9. Functionally, IGPS catalyzes the conversion of PRFAR and glutamine to IGP, AICAR and glutamate. The HisF subunit catalyzes the cyclization activity that produces IGP and AICAR from PRFAR using the ammonia provided by the HisH subunit. The protein is Imidazole glycerol phosphate synthase subunit HisF of Janthinobacterium sp. (strain Marseille) (Minibacterium massiliensis).